A 48-amino-acid polypeptide reads, in one-letter code: Toxin CSTX-14 (48 aa).

4 disulfide bridges follow: Cys-3–Cys-18, Cys-10–Cys-27, Cys-17–Cys-42, and Cys-29–Cys-40.

The protein belongs to the neurotoxin 19 (CSTX) family. 12 subfamily. In terms of assembly, heterodimer of A and B chains; disulfide-linked. In terms of processing, contains 4 disulfide bonds. Expressed by the venom gland.

The protein localises to the secreted. This Cupiennius salei (American wandering spider) protein is Toxin CSTX-14.